The sequence spans 500 residues: Glycogen synthase (500 aa).

K15 lines the ADP-alpha-D-glucose pocket.

This sequence belongs to the glycosyltransferase 1 family. Bacterial/plant glycogen synthase subfamily.

The enzyme catalyses [(1-&gt;4)-alpha-D-glucosyl](n) + ADP-alpha-D-glucose = [(1-&gt;4)-alpha-D-glucosyl](n+1) + ADP + H(+). It participates in glycan biosynthesis; glycogen biosynthesis. Synthesizes alpha-1,4-glucan chains using ADP-glucose. The protein is Glycogen synthase of Protochlamydia amoebophila (strain UWE25).